Consider the following 174-residue polypeptide: ATP-dependent protease subunit HslV (174 aa).

Threonine 4 is a catalytic residue. Residues alanine 159, cysteine 162, and threonine 165 each contribute to the Na(+) site.

This sequence belongs to the peptidase T1B family. HslV subfamily. A double ring-shaped homohexamer of HslV is capped on each side by a ring-shaped HslU homohexamer. The assembly of the HslU/HslV complex is dependent on binding of ATP.

The protein localises to the cytoplasm. It carries out the reaction ATP-dependent cleavage of peptide bonds with broad specificity.. With respect to regulation, allosterically activated by HslU binding. Protease subunit of a proteasome-like degradation complex believed to be a general protein degrading machinery. In Moorella thermoacetica (strain ATCC 39073 / JCM 9320), this protein is ATP-dependent protease subunit HslV.